The sequence spans 486 residues: Scarecrow-like protein 15 (486 aa).

Positions 1 to 28 (MKIPASSPQDTTNNNNNTNSTDSNHLSM) are disordered. The span at 10-24 (DTTNNNNNTNSTDSN) shows a compositional bias: low complexity. In terms of domain architecture, GRAS spans 113–485 (DSVDNGGFDF…RALVATSAWR (373 aa)). Residues 120 to 179 (FDFIEDLIRVVDCVESDELQLAQVVLSRLNQRLRSPAGRPLQRAAFYFKEALGSFLTGSN) are leucine repeat I (LRI). A VHIID region spans residues 198-266 (IKEYSGISPI…VSGGFLRVTA (69 aa)). A VHIID motif is present at residues 232–236 (VHVVD). A leucine repeat II (LRII) region spans residues 278–310 (LVKENLTQFAAEMKIRFQIEFVLMKTFEMLSFK). The PFYRE stretch occupies residues 320-410 (TVVLISPAIF…AFVLRPKISA (91 aa)). The segment at 413-485 (ETAADRRHTG…RALVATSAWR (73 aa)) is SAW.

It belongs to the GRAS family. As to expression, expressed in seedlings, roots, leaves and flowers.

It is found in the nucleus. Its function is as follows. Probable transcription factor involved in plant development. This Arabidopsis thaliana (Mouse-ear cress) protein is Scarecrow-like protein 15 (SCL15).